The following is a 148-amino-acid chain: Nucleoside diphosphate kinase (148 aa).

6 residues coordinate ATP: Lys-9, Phe-57, Arg-85, Thr-91, Arg-102, and Asn-112. Thr-91 is subject to Phosphothreonine. Residue His-115 is the Pros-phosphohistidine intermediate of the active site. Ser-122 is modified (phosphoserine).

The protein belongs to the NDK family. Homotetramer. It depends on Mg(2+) as a cofactor.

It localises to the cytoplasm. It catalyses the reaction a 2'-deoxyribonucleoside 5'-diphosphate + ATP = a 2'-deoxyribonucleoside 5'-triphosphate + ADP. The catalysed reaction is a ribonucleoside 5'-diphosphate + ATP = a ribonucleoside 5'-triphosphate + ADP. Functionally, major role in the synthesis of nucleoside triphosphates other than ATP. The ATP gamma phosphate is transferred to the NDP beta phosphate via a ping-pong mechanism, using a phosphorylated active-site intermediate. This chain is Nucleoside diphosphate kinase, found in Bacillus anthracis.